A 155-amino-acid polypeptide reads, in one-letter code: Ribonuclease H (155 aa).

The RNase H type-1 domain occupies 1–142; the sequence is MLKQVEIFTD…CDELARAAAM (142 aa). Mg(2+)-binding residues include Asp-10, Glu-48, Asp-70, and Asp-134.

Belongs to the RNase H family. In terms of assembly, monomer. Requires Mg(2+) as cofactor.

It localises to the cytoplasm. It carries out the reaction Endonucleolytic cleavage to 5'-phosphomonoester.. In terms of biological role, endonuclease that specifically degrades the RNA of RNA-DNA hybrids. The polypeptide is Ribonuclease H (Citrobacter koseri (strain ATCC BAA-895 / CDC 4225-83 / SGSC4696)).